Consider the following 1066-residue polypeptide: Phosphatidylinositol 4-kinase PIK1 (1066 aa).

The 133-residue stretch at 1 to 133 (MHKASSSKKS…GFQVARRVLN (133 aa)) folds into the PIK helical domain. Phosphoserine occurs at positions 10 and 236. Disordered stretches follow at residues 218–240 (KKTSRSKRVSSNRSSTPTSPIDL), 303–411 (DGKN…KKAN), and 564–624 (NENR…LGDM). Residues 342 to 356 (NNEDETGGETEEDAD) show a composition bias toward acidic residues. Polar residues-rich tracts occupy residues 374 to 411 (QPRTSSASSASLEGTPKLNRTNSQPLSRQAFKNSKKAN) and 570 to 597 (STLTSNNTRSSVYDSNSFNNGASRNEGL). A Phosphoserine modification is found at Ser-384. At Thr-394 the chain carries Phosphothreonine. 2 positions are modified to phosphoserine: Ser-396 and Ser-592. Low complexity predominate over residues 598-609 (SSTSRSDSASTA). Residues 770 to 1049 (ATKKERIRKT…FLIGKSLGSI (280 aa)) enclose the PI3K/PI4K catalytic domain. Residues 776-782 (IRKTSEY) form a G-loop region. Residues 915–923 (QVKDRHNGN) form a catalytic loop region. An activation loop region spans residues 934–958 (HIDFGFMLSNSPGSVGFEAAPFKLT).

This sequence belongs to the PI3/PI4-kinase family. Type III PI4K subfamily. As to quaternary structure, interacts with FRQ1.

It localises to the nucleus. It is found in the golgi apparatus. The protein localises to the trans-Golgi network. The enzyme catalyses a 1,2-diacyl-sn-glycero-3-phospho-(1D-myo-inositol) + ATP = a 1,2-diacyl-sn-glycero-3-phospho-(1D-myo-inositol 4-phosphate) + ADP + H(+). Its function is as follows. Acts on phosphatidylinositol (PI) in the first committed step in the production of the second messenger inositol 1,4,5,-trisphosphate. PIK1 is part of a nuclear phosphoinositide cycle and could control cytokinesis through the actin cytoskeleton. Involved in the response to mating pheromone. The chain is Phosphatidylinositol 4-kinase PIK1 from Saccharomyces cerevisiae (strain ATCC 204508 / S288c) (Baker's yeast).